The following is a 118-amino-acid chain: Late cornified envelope protein 5A (118 aa).

Positions 1–10 are enriched in low complexity; that stretch reads MSCQQSQQQC. 2 disordered regions span residues 1–32 and 72–118; these read MSCQQSQQQCQPPPKCTPKCPPKCTPKCPPKC and HRPR…GGCC. Residues 11 to 32 are compositionally biased toward pro residues; it reads QPPPKCTPKCPPKCTPKCPPKC. A compositionally biased stretch (basic residues) spans 72-82; it reads HRPRQSLRRRP. Residues 97–118 are compositionally biased toward low complexity; the sequence is GGSSCCHSSGGSGCCHSSGGCC.

It belongs to the LCE family. As to quaternary structure, interacts with CYSRT1; the interaction is direct. As to expression, skin-specific. Expression was readily detected in adult trunk skin, adult arm skin, fetal skin, penal skin, vulva, esophagus and tongue. Not expressed in the cervix, rectum, lung, colon, or placenta. Expression is observed in the heart.

Precursors of the cornified envelope of the stratum corneum. The sequence is that of Late cornified envelope protein 5A (LCE5A) from Homo sapiens (Human).